We begin with the raw amino-acid sequence, 658 residues long: DNA mismatch repair protein MutL (658 aa).

Residues 114–130 (RQEDSSHATQVKAEDGK) show a composition bias toward basic and acidic residues. 2 disordered regions span residues 114 to 137 (RQED…PTAA) and 369 to 391 (DYPT…TAPM).

This sequence belongs to the DNA mismatch repair MutL/HexB family.

This protein is involved in the repair of mismatches in DNA. It is required for dam-dependent methyl-directed DNA mismatch repair. May act as a 'molecular matchmaker', a protein that promotes the formation of a stable complex between two or more DNA-binding proteins in an ATP-dependent manner without itself being part of a final effector complex. The chain is DNA mismatch repair protein MutL from Neisseria meningitidis serogroup C (strain 053442).